The following is a 77-amino-acid chain: Acyl carrier protein (77 aa).

The 76-residue stretch at 2 to 77 (SDIAARVKKI…DATKFISEAQ (76 aa)) folds into the Carrier domain. Ser-37 bears the O-(pantetheine 4'-phosphoryl)serine mark.

It belongs to the acyl carrier protein (ACP) family. 4'-phosphopantetheine is transferred from CoA to a specific serine of apo-ACP by AcpS. This modification is essential for activity because fatty acids are bound in thioester linkage to the sulfhydryl of the prosthetic group.

The protein resides in the cytoplasm. It functions in the pathway lipid metabolism; fatty acid biosynthesis. Carrier of the growing fatty acid chain in fatty acid biosynthesis. This chain is Acyl carrier protein, found in Jannaschia sp. (strain CCS1).